The primary structure comprises 347 residues: 2-hydroxyacid dehydrogenase A (347 aa).

Residues 157-158 (RI), aspartate 177, 234-236 (TSR), and aspartate 260 contribute to the NAD(+) site. Arginine 236 is an active-site residue. Glutamate 265 is a catalytic residue.

The protein belongs to the D-isomer specific 2-hydroxyacid dehydrogenase family.

It carries out the reaction a (2R)-2-hydroxycarboxylate + NADP(+) = a 2-oxocarboxylate + NADPH + H(+). In terms of biological role, 2-hydroxyacid dehydrogenase that is capable to reduce pyruvate, hydroxypyruvate and glyoxylate in a NADPH- or NADH-dependent manner. In contrast to 2-HadhD/morA, does not recognize 4-methyl-2-oxopentanoate (MOA) as a substrate. The chain is 2-hydroxyacid dehydrogenase A from Aspergillus oryzae (strain ATCC 42149 / RIB 40) (Yellow koji mold).